We begin with the raw amino-acid sequence, 1103 residues long: Trophozoite exported protein 1 (1103 aa).

Residues 173 to 212 (KKEKIEDKKYEQDDEEENEEEEEEEEEEEGEEENKEDEEF) adopt a coiled-coil conformation. Disordered stretches follow at residues 178–210 (EDKK…KEDE) and 271–301 (KSYS…DNGK). Over residues 184 to 210 (QDDEEENEEEEEEEEEEEGEEENKEDE) the composition is skewed to acidic residues. Residues 271-280 (KSYSGDEKIN) are compositionally biased toward basic and acidic residues. 2 coiled-coil regions span residues 304 to 330 (DYVK…LECN) and 478 to 518 (YKNY…KLNN). The disordered stretch occupies residues 544–601 (YFDEGENPYNRNNKNYRTDNKNSDDNNNNNNYYYNNYNSDDNYNSEDNEYNNGNYRFR). The segment covering 568 to 585 (DNNNNNNYYYNNYNSDDN) has biased composition (low complexity). 3 coiled-coil regions span residues 650 to 791 (FRNL…LSGI), 819 to 932 (DEKY…IYKK), and 993 to 1030 (NKKL…NLSK). The RING-type zinc-finger motif lies at 1050 to 1089 (CSVCMENFRNYIIIKCGHIYCNNCIFNNLKTRNRKCPQCK).

It localises to the host cell membrane. This Plasmodium falciparum (isolate 3D7) protein is Trophozoite exported protein 1.